Reading from the N-terminus, the 432-residue chain is MRVVILGSGVVGVTSAWYLCQAGHDVTVIDREPGPALETSAANAGQISPGYAAPWAAPGVPLKAIKWMFQRHAPLAVRLDGTQFQLKWMWQMLRNCDTRHYMENKGRMVRLAEYSRDCLKALRASTGIQYEGRQGGTLQLFRTAQQYENATRDIAVLEDAGVPYQLLESSRLAEVEPALAEVAHKLTGGLRLPNDETGDCQLFTQRLAQMAEQAGVTFRFNTPVEKLLYEGEQIYGVKCGDDIIKADAYVMAFGSYSTAMLKGIVDIPVYPLKGYSLTIPVAQDDGAPVSTILDETYKIAITRFDKRIRVGGMAEIVGFNTELLQPRRETLEMVVRDLFPRGGHVEQATFWTGLRPMTPDGTPVIGRTRFKNLWLNTGHGTLGWTMACGSGQLLSDILSGRTPAIPYDDLSVARYSPGFTPSRPRHLHGAHN.

3–17 (VVILGSGVVGVTSAW) serves as a coordination point for FAD.

The protein belongs to the DadA oxidoreductase family. FAD is required as a cofactor.

It catalyses the reaction a D-alpha-amino acid + A + H2O = a 2-oxocarboxylate + AH2 + NH4(+). It participates in amino-acid degradation; D-alanine degradation; NH(3) and pyruvate from D-alanine: step 1/1. Functionally, oxidative deamination of D-amino acids. The polypeptide is D-amino acid dehydrogenase (Citrobacter koseri (strain ATCC BAA-895 / CDC 4225-83 / SGSC4696)).